The chain runs to 410 residues: Sensor histidine kinase GlnK (410 aa).

Topologically, residues 1 to 15 (MLITVPLAGELKFYP) are extracellular. A helical transmembrane segment spans residues 16 to 36 (LNEEFRVSFGAPVFFFFLSLL). Over 37–38 (RH) the chain is Cytoplasmic. Residues 39 to 59 (VPAVLPGFLTGAAVFIFRVFL) traverse the membrane as a helical segment. Residues 60 to 71 (ELWGGGHNGLTP) are Extracellular-facing. A helical membrane pass occupies residues 72–92 (ILYDQASGFFFYMTYACLFSI). Residues 93 to 102 (LKANRFRERP) are Cytoplasmic-facing. A helical transmembrane segment spans residues 103–123 (IMLGFIGFMIEVVSDCVELTV). The Extracellular segment spans residues 124–139 (QFLIFHTVVTPEKITD). Residues 140–160 (IAVIAISHTFIVMSFYSVLKL) form a helical membrane-spanning segment. Residues 161 to 410 (YETQSREKQT…LPVRHLIQKG (250 aa)) lie on the Cytoplasmic side of the membrane. The Histidine kinase domain occupies 189–405 (VHLKKTLKTT…VFAIRLPVRH (217 aa)). Position 190 is a phosphohistidine; by autocatalysis (His190).

Homotrimer. Under poor nitrogen source such as nitrate, the complex between GlnK and AmtB, which are the transmembrane ammonium transporter and its cognate regulator, respectively, interacts with TnrA. GlnK-ATP complex are not able to bind TnrA.

Its subcellular location is the cell membrane. It carries out the reaction ATP + protein L-histidine = ADP + protein N-phospho-L-histidine.. In terms of biological role, member of the two-component regulatory system GlnK/GlnL that positively regulates the expression of the glsA-glnT operon in response to glutamine. It seems that autophosphorylated GlnK transfers a phosphoryl group to GlnL, which positively regulates the expression of the glsA-glnT operon. Interaction between GlnK-AmtB complex and TnrA protects TnrA from proteolytic degradation. In Bacillus subtilis (strain 168), this protein is Sensor histidine kinase GlnK.